The sequence spans 267 residues: tRNA pseudouridine synthase A (267 aa).

The active-site Nucleophile is aspartate 51. Tyrosine 109 provides a ligand contact to substrate.

This sequence belongs to the tRNA pseudouridine synthase TruA family. Homodimer.

The catalysed reaction is uridine(38/39/40) in tRNA = pseudouridine(38/39/40) in tRNA. Its function is as follows. Formation of pseudouridine at positions 38, 39 and 40 in the anticodon stem and loop of transfer RNAs. The chain is tRNA pseudouridine synthase A from Staphylococcus aureus (strain Mu3 / ATCC 700698).